The following is a 562-amino-acid chain: Potassium-transporting ATPase potassium-binding subunit (562 aa).

Helical transmembrane passes span 5–25, 63–83, 132–152, 175–195, 250–270, 279–299, 379–399, 416–436, 483–503, and 526–546; these read AFLLIFGLLLTVLIVAQPLGS, AAAILALNLIGIVVLFVLLMA, GLTVQNFLSAASGIAVAFALI, LYVLLPLSLLLALFFVSQGVL, LSNIVQMLAILLIPTALCFAF, QGHALLWAMALIFIVAAAVVM, GLYGMLLFVLLTVFIAGLMIG, MTALAILIPPALVLLGTALAL, VLLAVAMLLGRFAVMVPVLAI, and LFIGMLIAIVLLIGALTFIPA.

Belongs to the KdpA family. The system is composed of three essential subunits: KdpA, KdpB and KdpC.

It is found in the cell inner membrane. Part of the high-affinity ATP-driven potassium transport (or Kdp) system, which catalyzes the hydrolysis of ATP coupled with the electrogenic transport of potassium into the cytoplasm. This subunit binds the periplasmic potassium ions and delivers the ions to the membrane domain of KdpB through an intramembrane tunnel. In Pectobacterium atrosepticum (strain SCRI 1043 / ATCC BAA-672) (Erwinia carotovora subsp. atroseptica), this protein is Potassium-transporting ATPase potassium-binding subunit.